Reading from the N-terminus, the 1530-residue chain is Neurexin-1 (1530 aa).

A signal peptide spans M1 to G30. The Laminin G-like 1 domain occupies L31 to G212. Topologically, residues L31–T1454 are extracellular. 2 N-linked (GlcNAc...) asparagine glycosylation sites follow: N125 and N190. The tract at residues S199 to E221 is disordered. Residues G213–S256 form the EGF-like 1 domain. 2 cysteine pairs are disulfide-bonded: C228–C243 and C245–C255. Laminin G-like domains follow at residues I299–C496 and D503–C695. Ca(2+) contacts are provided by D345, L362, and M430. Disulfide bonds link C460-C496, C666-C695, C703-C714, C708-C723, and C725-C735. The 38-residue stretch at T699–E736 folds into the EGF-like 2 domain. S705 carries an O-linked (Glc...) serine glycan. Laminin G-like domains follow at residues V741–C914 and D928–C1103. 2 residues coordinate Ca(2+): D788 and L805. N-linked (GlcNAc...) asparagine glycosylation occurs at N813. R864 provides a ligand contact to Ca(2+). 5 disulfides stabilise this stretch: C906-C914, C1075-C1103, C1110-C1121, C1115-C1130, and C1132-C1142. Positions P1106–N1143 constitute an EGF-like 3 domain. The 199-residue stretch at Y1149 to V1347 folds into the Laminin G-like 6 domain. 2 residues coordinate Ca(2+): D1199 and V1216. Residue N1246 is glycosylated (N-linked (GlcNAc...) asparagine). Residues I1298 and N1300 each contribute to the Ca(2+) site. O-linked (Xyl...) (heparan sulfate) serine glycosylation is present at S1408. The tract at residues C1411–S1443 is disordered. Residues G1455–M1475 traverse the membrane as a helical segment. Over Y1476–V1530 the chain is Cytoplasmic. The interaction with CASK stretch occupies residues N1497–N1523. Positions N1497–V1530 are disordered.

Belongs to the neurexin family. In terms of assembly, interacts (via laminin G-like domain 2 and/or laminin G-like domain 6) with NLGN1 forming a heterotetramer, where one NLGN1 dimer interacts with one NRXN1 dimer. Also interacts (via laminin G-like domain 2 and/or laminin G-like domain 6) with NLGN2, NLGN3 and NLGN4L; interactions with NLGN1, NLGN2, NLGN3 and NLGN4L are calcium-dependent. Interacts (via cytoplasmic C-terminal region) with CASK (via the PDZ, SH3 and guanylate kinase-like domains). Interacts (via cytoplasmic C-terminus) with CASKIN1 and APBA1. Interacts (via laminin G-like domain 2) with NXPH1 and NXPH3. Alpha-type isoforms (neurexin-1-alpha) interact (via laminin G-like domain 2 and/or laminin G-like domain 6) with DAG1 (via alpha-dystroglycan chain). Interacts with LRRTM1, LRRTM2, LRRTM3 and LRRTM4. Interacts with SYT13 and SYTL1. Interacts with CBLN1, CBLN2 and, less avidly, with CBLN4. Interacts with CLSTN3. Alpha-type isoforms interact with alpha-latrotoxin from spider venom. Post-translationally, O-glycosylated; contains heparan sulfate. Heparan sulfate attachment is required for synapse development by mediating interactions with neuroligins and LRRTM2.

It localises to the presynaptic cell membrane. Functionally, cell surface protein involved in cell-cell-interactions, exocytosis of secretory granules and regulation of signal transmission. Function is isoform-specific. Alpha-type isoforms have a long N-terminus with six laminin G-like domains and play an important role in synaptic signal transmission. Alpha-type isoforms play a role in the regulation of calcium channel activity and Ca(2+)-triggered neurotransmitter release at synapses and at neuromuscular junctions. They play an important role in Ca(2+)-triggered exocytosis of secretory granules in pituitary gland. They may affect their functions at synapses and in endocrine cells via their interactions with proteins from the exocytotic machinery. Likewise, alpha-type isoforms play a role in regulating the activity of postsynaptic NMDA receptors, a subtype of glutamate-gated ion channels. Both alpha-type and beta-type isoforms may play a role in the formation or maintenance of synaptic junctions via their interactions (via the extracellular domains) with neuroligin family members, CBLN1 or CBLN2. In vitro, triggers the de novo formation of presynaptic structures. May be involved in specification of excitatory synapses. Alpha-type isoforms were first identified as receptors for alpha-latrotoxin from spider venom. This is Neurexin-1 (NRXN1) from Bos taurus (Bovine).